Here is a 110-residue protein sequence, read N- to C-terminus: Large ribosomal subunit protein uL24 (110 aa).

It belongs to the universal ribosomal protein uL24 family. In terms of assembly, part of the 50S ribosomal subunit.

One of two assembly initiator proteins, it binds directly to the 5'-end of the 23S rRNA, where it nucleates assembly of the 50S subunit. Functionally, one of the proteins that surrounds the polypeptide exit tunnel on the outside of the subunit. The sequence is that of Large ribosomal subunit protein uL24 from Roseiflexus sp. (strain RS-1).